The primary structure comprises 271 residues: 3-methyl-2-oxobutanoate hydroxymethyltransferase (271 aa).

Residues aspartate 51 and aspartate 90 each contribute to the Mg(2+) site. 3-methyl-2-oxobutanoate is bound by residues 51–52 (DS), aspartate 90, and lysine 118. Glutamate 120 serves as a coordination point for Mg(2+). Glutamate 186 (proton acceptor) is an active-site residue.

Belongs to the PanB family. As to quaternary structure, homodecamer; pentamer of dimers. Mg(2+) is required as a cofactor.

The protein localises to the cytoplasm. It carries out the reaction 3-methyl-2-oxobutanoate + (6R)-5,10-methylene-5,6,7,8-tetrahydrofolate + H2O = 2-dehydropantoate + (6S)-5,6,7,8-tetrahydrofolate. It participates in cofactor biosynthesis; (R)-pantothenate biosynthesis; (R)-pantoate from 3-methyl-2-oxobutanoate: step 1/2. Functionally, catalyzes the reversible reaction in which hydroxymethyl group from 5,10-methylenetetrahydrofolate is transferred onto alpha-ketoisovalerate to form ketopantoate. This chain is 3-methyl-2-oxobutanoate hydroxymethyltransferase, found in Xanthomonas axonopodis pv. citri (strain 306).